We begin with the raw amino-acid sequence, 118 residues long: Small ribosomal subunit protein bS6 (118 aa).

It belongs to the bacterial ribosomal protein bS6 family.

Its function is as follows. Binds together with bS18 to 16S ribosomal RNA. The sequence is that of Small ribosomal subunit protein bS6 from Orientia tsutsugamushi (strain Ikeda) (Rickettsia tsutsugamushi).